The primary structure comprises 161 residues: uncharacterized protein (161 aa).

This is an uncharacterized protein from Haemophilus influenzae (strain ATCC 51907 / DSM 11121 / KW20 / Rd).